A 455-amino-acid polypeptide reads, in one-letter code: Chromosomal replication initiator protein DnaA 2 (455 aa).

Positions 1–95 (MLTCNDCSTW…KRSSPQIAAS (95 aa)) are domain I, interacts with DnaA modulators. Positions 96-112 (VTKPAVEVSEENKDFQL) are domain II. The segment at 113 to 328 (KLNGAYRFDN…GAINKLTAYC (216 aa)) is domain III, AAA+ region. Gly-157, Gly-159, Lys-160, and Thr-161 together coordinate ATP. Residues 329 to 455 (LLFNKPLTET…IAIDSPQHFV (127 aa)) are domain IV, binds dsDNA.

This sequence belongs to the DnaA family. As to quaternary structure, oligomerizes as a right-handed, spiral filament on DNA at oriC.

It is found in the cytoplasm. Its function is as follows. Plays an essential role in the initiation and regulation of chromosomal replication. ATP-DnaA binds to the origin of replication (oriC) to initiate formation of the DNA replication initiation complex once per cell cycle. Binds the DnaA box (a 9 base pair repeat at the origin) and separates the double-stranded (ds)DNA. Forms a right-handed helical filament on oriC DNA; dsDNA binds to the exterior of the filament while single-stranded (ss)DNA is stabiized in the filament's interior. The ATP-DnaA-oriC complex binds and stabilizes one strand of the AT-rich DNA unwinding element (DUE), permitting loading of DNA polymerase. After initiation quickly degrades to an ADP-DnaA complex that is not apt for DNA replication. Binds acidic phospholipids. In Chlamydia muridarum (strain MoPn / Nigg), this protein is Chromosomal replication initiator protein DnaA 2.